A 375-amino-acid chain; its full sequence is Queuine tRNA-ribosyltransferase (375 aa).

Aspartate 89 serves as the catalytic Proton acceptor. Substrate contacts are provided by residues 89 to 93, aspartate 143, glutamine 187, and glycine 214; that span reads DSGGF. Residues 245–251 form an RNA binding region; it reads GVGKPED. Aspartate 264 acts as the Nucleophile in catalysis. Residues 269-273 form an RNA binding; important for wobble base 34 recognition region; it reads TRNAR. 4 residues coordinate Zn(2+): cysteine 302, cysteine 304, cysteine 307, and histidine 333.

Belongs to the queuine tRNA-ribosyltransferase family. As to quaternary structure, homodimer. Within each dimer, one monomer is responsible for RNA recognition and catalysis, while the other monomer binds to the replacement base PreQ1. The cofactor is Zn(2+).

The enzyme catalyses 7-aminomethyl-7-carbaguanine + guanosine(34) in tRNA = 7-aminomethyl-7-carbaguanosine(34) in tRNA + guanine. It participates in tRNA modification; tRNA-queuosine biosynthesis. Functionally, catalyzes the base-exchange of a guanine (G) residue with the queuine precursor 7-aminomethyl-7-deazaguanine (PreQ1) at position 34 (anticodon wobble position) in tRNAs with GU(N) anticodons (tRNA-Asp, -Asn, -His and -Tyr). Catalysis occurs through a double-displacement mechanism. The nucleophile active site attacks the C1' of nucleotide 34 to detach the guanine base from the RNA, forming a covalent enzyme-RNA intermediate. The proton acceptor active site deprotonates the incoming PreQ1, allowing a nucleophilic attack on the C1' of the ribose to form the product. After dissociation, two additional enzymatic reactions on the tRNA convert PreQ1 to queuine (Q), resulting in the hypermodified nucleoside queuosine (7-(((4,5-cis-dihydroxy-2-cyclopenten-1-yl)amino)methyl)-7-deazaguanosine). The chain is Queuine tRNA-ribosyltransferase from Salmonella typhi.